Consider the following 336-residue polypeptide: Holliday junction branch migration complex subunit RuvB (336 aa).

The interval 4 to 184 (ADRLISAGTT…FGIVQRLEFY (181 aa)) is large ATPase domain (RuvB-L). ATP is bound by residues Ile23, Arg24, Gly65, Lys68, Thr69, Thr70, 131–133 (EDY), Arg174, Tyr184, and Arg221. Thr69 serves as a coordination point for Mg(2+). Positions 185–255 (QVPDLQYIVS…IAAQALDMLN (71 aa)) are small ATPAse domain (RuvB-S). Residues 258 to 336 (AEGFDYMDRK…HFGITPPEMP (79 aa)) form a head domain (RuvB-H) region. Residues Arg294, Arg313, and Arg318 each contribute to the DNA site.

It belongs to the RuvB family. As to quaternary structure, homohexamer. Forms an RuvA(8)-RuvB(12)-Holliday junction (HJ) complex. HJ DNA is sandwiched between 2 RuvA tetramers; dsDNA enters through RuvA and exits via RuvB. An RuvB hexamer assembles on each DNA strand where it exits the tetramer. Each RuvB hexamer is contacted by two RuvA subunits (via domain III) on 2 adjacent RuvB subunits; this complex drives branch migration. In the full resolvosome a probable DNA-RuvA(4)-RuvB(12)-RuvC(2) complex forms which resolves the HJ.

It localises to the cytoplasm. It carries out the reaction ATP + H2O = ADP + phosphate + H(+). In terms of biological role, the RuvA-RuvB-RuvC complex processes Holliday junction (HJ) DNA during genetic recombination and DNA repair, while the RuvA-RuvB complex plays an important role in the rescue of blocked DNA replication forks via replication fork reversal (RFR). RuvA specifically binds to HJ cruciform DNA, conferring on it an open structure. The RuvB hexamer acts as an ATP-dependent pump, pulling dsDNA into and through the RuvAB complex. RuvB forms 2 homohexamers on either side of HJ DNA bound by 1 or 2 RuvA tetramers; 4 subunits per hexamer contact DNA at a time. Coordinated motions by a converter formed by DNA-disengaged RuvB subunits stimulates ATP hydrolysis and nucleotide exchange. Immobilization of the converter enables RuvB to convert the ATP-contained energy into a lever motion, pulling 2 nucleotides of DNA out of the RuvA tetramer per ATP hydrolyzed, thus driving DNA branch migration. The RuvB motors rotate together with the DNA substrate, which together with the progressing nucleotide cycle form the mechanistic basis for DNA recombination by continuous HJ branch migration. Branch migration allows RuvC to scan DNA until it finds its consensus sequence, where it cleaves and resolves cruciform DNA. The chain is Holliday junction branch migration complex subunit RuvB from Shigella boydii serotype 18 (strain CDC 3083-94 / BS512).